We begin with the raw amino-acid sequence, 200 residues long: MLAFCRSSLKSKKYFIILLALAAIAGLGTHAAWSSNGLPRIDNKTLGRLAQQHPVVVLFRHAEHCDRSTNQCLSDKTGITVKGTQDARELGNAFSADIPDFDLYSSNTVRTIQSATWFSAGKKLTVDKRLLQCGNEIYSAIKDLQSKAPDKNIVIFTHNHCLTYIAKDKRDATFKPDYLDGLVMHVEKGKVYLDGEFVNH.

An N-terminal signal peptide occupies residues 1–25 (MLAFCRSSLKSKKYFIILLALAAIA).

The protein belongs to the phosphoglycerate mutase family. Ais subfamily.

It is found in the periplasm. The protein operates within bacterial outer membrane biogenesis; lipopolysaccharide metabolism. Its function is as follows. Catalyzes the dephosphorylation of heptose(II) of the outer membrane lipopolysaccharide core. In Escherichia coli O157:H7 (strain EC4115 / EHEC), this protein is Lipopolysaccharide core heptose(II)-phosphate phosphatase.